Consider the following 231-residue polypeptide: MIP18 family protein YHR122W (231 aa).

2 disordered regions span residues 1–26 (MSEFLNENPDILEENQLPTRKEDSTK) and 75–100 (LTSDEDSLPAESEDESVAGGGKEEEE). N-acetylserine is present on Ser2. Residues 76–90 (TSDEDSLPAESEDES) are compositionally biased toward acidic residues.

The protein belongs to the MIP18 family.

May play a role in chromosome segregation through establishment of sister chromatid cohesion. The protein is MIP18 family protein YHR122W of Saccharomyces cerevisiae (strain ATCC 204508 / S288c) (Baker's yeast).